Here is a 448-residue protein sequence, read N- to C-terminus: Methionine aminopeptidase 2 (448 aa).

Residues 1–94 (MAAQVTDALK…PRVLLSNLFP (94 aa)) form a disordered region. The segment covering 37-50 (AEAEDSDDDDEEPV) has biased composition (acidic residues). Residues 61-74 (KKKRKRKKKPKKKA) show a composition bias toward basic residues. Residue His-201 participates in substrate binding. Asp-221, Asp-232, and His-301 together coordinate a divalent metal cation. His-309 is a substrate binding site. A divalent metal cation is bound by residues Glu-334 and Glu-429.

This sequence belongs to the peptidase M24A family. Methionine aminopeptidase eukaryotic type 2 subfamily. The cofactor is Co(2+). Zn(2+) serves as cofactor. It depends on Mn(2+) as a cofactor. Fe(2+) is required as a cofactor.

Its subcellular location is the cytoplasm. The enzyme catalyses Release of N-terminal amino acids, preferentially methionine, from peptides and arylamides.. In terms of biological role, cotranslationally removes the N-terminal methionine from nascent proteins. The N-terminal methionine is often cleaved when the second residue in the primary sequence is small and uncharged (Met-Ala-, Cys, Gly, Pro, Ser, Thr, or Val). The chain is Methionine aminopeptidase 2 from Botryotinia fuckeliana (strain B05.10) (Noble rot fungus).